The sequence spans 422 residues: Serine hydroxymethyltransferase (422 aa).

120–122 (GHI) is a (6S)-5,6,7,8-tetrahydrofolate binding site. Lys-226 carries the N6-(pyridoxal phosphate)lysine modification. Residue Glu-241 participates in (6S)-5,6,7,8-tetrahydrofolate binding.

Belongs to the SHMT family. Homodimer. The cofactor is pyridoxal 5'-phosphate.

Its subcellular location is the cytoplasm. The catalysed reaction is 5,10-methylenetetrahydromethanopterin + glycine + H2O = 5,6,7,8-tetrahydromethanopterin + L-serine. The protein operates within amino-acid biosynthesis; glycine biosynthesis; glycine from L-serine: step 1/1. In terms of biological role, catalyzes the reversible interconversion of serine and glycine with tetrahydromethanopterin (H4MPT) serving as the one-carbon carrier. Also exhibits a pteridine-independent aldolase activity toward beta-hydroxyamino acids, producing glycine and aldehydes, via a retro-aldol mechanism. This chain is Serine hydroxymethyltransferase, found in Methanosphaera stadtmanae (strain ATCC 43021 / DSM 3091 / JCM 11832 / MCB-3).